The chain runs to 406 residues: S-adenosylmethionine synthase (406 aa).

Residue H17 participates in ATP binding. D19 provides a ligand contact to Mg(2+). E45 provides a ligand contact to K(+). Positions 58 and 101 each coordinate L-methionine. The segment at 101–111 is flexible loop; sequence QSAEINQGVAR. ATP is bound by residues 178–180, D258, 264–265, A281, and K285; these read DGK and RK. Position 258 (D258) interacts with L-methionine. Residue K289 participates in L-methionine binding.

This sequence belongs to the AdoMet synthase family. As to quaternary structure, homotetramer; dimer of dimers. It depends on Mg(2+) as a cofactor. The cofactor is K(+).

It localises to the cytoplasm. It carries out the reaction L-methionine + ATP + H2O = S-adenosyl-L-methionine + phosphate + diphosphate. The protein operates within amino-acid biosynthesis; S-adenosyl-L-methionine biosynthesis; S-adenosyl-L-methionine from L-methionine: step 1/1. Its function is as follows. Catalyzes the formation of S-adenosylmethionine (AdoMet) from methionine and ATP. The overall synthetic reaction is composed of two sequential steps, AdoMet formation and the subsequent tripolyphosphate hydrolysis which occurs prior to release of AdoMet from the enzyme. The polypeptide is S-adenosylmethionine synthase (Bifidobacterium longum subsp. infantis (strain ATCC 15697 / DSM 20088 / JCM 1222 / NCTC 11817 / S12)).